The sequence spans 294 residues: Zinc finger protein CONSTANS-LIKE 3 (294 aa).

The Zn(2+) site is built by cysteine 8, cysteine 11, cysteine 31, histidine 36, cysteine 51, cysteine 54, cysteine 74, and histidine 79. Residues 8–50 (CDSCKSTAATLFCRADAAFLCGDCDGKIHTANKLASRHERVWL) form a B box-type 1; atypical zinc finger. Residues 51 to 93 (CEVCEQAPAHVTCKADAAALCVTCDRDIHSANPLSRRHERVPI) form a B box-type 2; atypical zinc finger. In terms of domain architecture, CCT spans 229 to 271 (REARVLRYREKRKNRKFEKTIRYASRKAYAEMRPRIKGRFAKR).

This sequence belongs to the CONSTANS family.

Its subcellular location is the nucleus. The polypeptide is Zinc finger protein CONSTANS-LIKE 3 (COL3) (Arabidopsis thaliana (Mouse-ear cress)).